The following is a 64-amino-acid chain: Large ribosomal subunit protein bL35 (64 aa).

2 stretches are compositionally biased toward basic residues: residues 1–15 and 23–43; these read MPKQKSHSGASKRFR and VRQKANRRHLLEHKSSRRTRR. Residues 1 to 64 are disordered; that stretch reads MPKQKSHSGA…AGRIKRLLAR (64 aa).

This sequence belongs to the bacterial ribosomal protein bL35 family.

The sequence is that of Large ribosomal subunit protein bL35 from Frankia alni (strain DSM 45986 / CECT 9034 / ACN14a).